Reading from the N-terminus, the 242-residue chain is Large ribosomal subunit protein uL1 (242 aa).

Belongs to the universal ribosomal protein uL1 family. In terms of assembly, part of the 50S ribosomal subunit.

Functionally, binds directly to 23S rRNA. The L1 stalk is quite mobile in the ribosome, and is involved in E site tRNA release. Protein L1 is also a translational repressor protein, it controls the translation of the L11 operon by binding to its mRNA. This is Large ribosomal subunit protein uL1 from Dictyoglomus thermophilum (strain ATCC 35947 / DSM 3960 / H-6-12).